The following is a 761-amino-acid chain: Semaphorin-3D (761 aa).

The N-terminal stretch at 1–24 (MRASQVPNACSLLSLAMLFFPVTG) is a signal peptide. In terms of domain architecture, Sema spans 32-519 (RLKLSYKDLL…SRDGLVQLSL (488 aa)). An intrachain disulfide couples C105 to C116. Residue N127 is glycosylated (N-linked (GlcNAc...) asparagine). Disulfide bonds link C134–C143, C274–C386, C298–C346, and C522–C540. Positions 552–670 (PTSKRRARRQ…IHTIVKLNLN (119 aa)) constitute an Ig-like C2-type domain. N595 carries an N-linked (GlcNAc...) asparagine glycan. Residues C653 and C719 are joined by a disulfide bond. Positions 728–754 (RRQRNKGGAKWKHVQEMKKKRNRRHHE) are enriched in basic residues. Residues 728 to 761 (RRQRNKGGAKWKHVQEMKKKRNRRHHEPARPPST) form a disordered region.

This sequence belongs to the semaphorin family. As to expression, developing spinal cord and developing visual system. Collapsin-1, -2, -3, and -5 bind to overlapping but distinct axon tracts.

The protein resides in the secreted. Induces the collapse and paralysis of neuronal growth cones. Could potentially act as repulsive cues toward specific neuronal populations. Binds to neuropilin. In Gallus gallus (Chicken), this protein is Semaphorin-3D (SEMA3D).